A 514-amino-acid chain; its full sequence is Carboxysome shell carbonic anhydrase (514 aa).

An N-terminal domain region spans residues 1 to 144; it reads MNTRNTRSKQ…LTAATEQFSR (144 aa). Residues 151 to 397 are catalytic domain; sequence DDSASAIGFF…GRYPPNDIGH (247 aa). Cys173 contacts Zn(2+). The Proton acceptor role is filled by Asp175. Positions 242 and 253 each coordinate Zn(2+). The C-terminal domain stretch occupies residues 398-514; sequence AERYISVGDG…GSPIEEVASA (117 aa).

It belongs to the beta-class carbonic anhydrase family. CsoSCA subfamily. As to quaternary structure, homodimer, may form filaments. It depends on Zn(2+) as a cofactor.

It localises to the carboxysome. The enzyme catalyses hydrogencarbonate + H(+) = CO2 + H2O. Carbonic anhydrase activity is inhibited by ethoxyzolamide, dithiothreitol, cyanide, and divalent metal chelators dipicolinic acid and nitrilotriacetic acid. Reversible hydration of carbon dioxide. Essential for chemolithotrophic carbon dioxide fixation, supplies CO(2) to RuBisCO (ribulose bisphosphate carboxylase, cbbL-cbbS) in the carboxysome. There are estimated to be 40 CsoSCA dimers per carboxysome. Functionally, unlike beta-carboxysomes, alpha-carboxysomes (Cb) can form without cargo protein. CsoS2 is essential for Cb formation and is also capable of targeting foreign proteins to the Cb. The Cb shell assembles with the aid of CsoS2; CsoS1A, CsoS1B and CsoS1C form the majority of the shell while CsoS4A and CsoS4B form vertices. CsoS1D forms pseudohexamers that probably control metabolite flux into and out of the shell. This is Carboxysome shell carbonic anhydrase from Halothiobacillus neapolitanus (strain ATCC 23641 / c2) (Thiobacillus neapolitanus).